We begin with the raw amino-acid sequence, 312 residues long: Beta-ketoacyl-[acyl-carrier-protein] synthase III (312 aa).

Catalysis depends on residues Cys112 and His237. The ACP-binding stretch occupies residues 238–242; that stretch reads QANIR. Residue Asn267 is part of the active site.

Belongs to the thiolase-like superfamily. FabH family. As to quaternary structure, homodimer.

It localises to the cytoplasm. The enzyme catalyses malonyl-[ACP] + acetyl-CoA + H(+) = 3-oxobutanoyl-[ACP] + CO2 + CoA. It functions in the pathway lipid metabolism; fatty acid biosynthesis. Catalyzes the condensation reaction of fatty acid synthesis by the addition to an acyl acceptor of two carbons from malonyl-ACP. Catalyzes the first condensation reaction which initiates fatty acid synthesis and may therefore play a role in governing the total rate of fatty acid production. Possesses both acetoacetyl-ACP synthase and acetyl transacylase activities. Its substrate specificity determines the biosynthesis of branched-chain and/or straight-chain of fatty acids. This Listeria welshimeri serovar 6b (strain ATCC 35897 / DSM 20650 / CCUG 15529 / CIP 8149 / NCTC 11857 / SLCC 5334 / V8) protein is Beta-ketoacyl-[acyl-carrier-protein] synthase III.